Here is a 144-residue protein sequence, read N- to C-terminus: MFSKVNNQKMLEDCFYIRKKVFVEEQGVPEESEIDEYESESIHLIGYDNGQPVATARIRPINETTVKIERVAVMKSHRGQGMGRMLMQAVESLAKDEGFYVATMNAQCHAIPFYESLNFKMRGNIFLEEGIEHIEMTKKLTSLN.

The N-acetyltransferase domain occupies 1–141 (MFSKVNNQKM…EHIEMTKKLT (141 aa)). CoA-binding positions include 71–73 (VAV), G79, and 112–114 (PFY).

It belongs to the UPF0039 (ElaA) family.

Could catalyze the transfer of an acetyl group from acetyl coenzyme A (AcCoA) to an acceptor substrate and release both CoA and the acetylated product. This chain is Putative acetyltransferase SAOUHSC_00995, found in Staphylococcus aureus (strain NCTC 8325 / PS 47).